The following is a 153-amino-acid chain: Movement protein (153 aa).

Disordered stretches follow at residues 1 to 24 and 107 to 153; these read MAQE…EQDP and ALSL…RNQR. Composition is skewed to polar residues over residues 109-122 and 140-153; these read SLLS…NQPW and GQRQ…RNQR.

It belongs to the luteoviruses movement protein family.

It is found in the host nucleus envelope. In terms of biological role, transports viral genome to neighboring plant cells directly through plasmosdesmata, without any budding. The movement protein allows efficient cell to cell propagation, by bypassing the host cell wall barrier. Acts as a suppressor of RNA-mediated gene silencing, also known as post-transcriptional gene silencing (PTGS), a mechanism of plant viral defense that limits the accumulation of viral RNAs. This chain is Movement protein, found in Avena byzantina (Oat).